Consider the following 223-residue polypeptide: UPF0319 protein VPA1584 (223 aa).

The signal sequence occupies residues 1 to 21 (MKLIKPLTCALALAMSGMAFA).

It belongs to the UPF0319 family.

The chain is UPF0319 protein VPA1584 from Vibrio parahaemolyticus serotype O3:K6 (strain RIMD 2210633).